The sequence spans 1386 residues: MISFVTLLAILGLLSISWADQTVRSVAGDQRVTDPVIVGDNSILDYYGGSNYDFSNNFEIGRGTLYIGKESYFSSFQSAPTDVPNSFHLLIKNTNNLQNNGQFIIENIKRHANQCSNSSIQVFPINFQNDGEFEIISGGVEGRCCLPTSVIAPQNFLNNGKFYYKVLTDTGSIYSGSCMQNVDIGASTTTTVNNNLWEFTGSINAQINGAVSGAAQINLDGSNMFVNANTFSGQVVNLINGGSFLQTSDPLSNIVVINGLGTSDTGVTSIAVKGKGKSFTYNPSSGIVKLTTVEGKTYAYQIGCGYNTKKFITNNDSGASYESADNFFVLTYSEPYSPQTCQLENSSIFSSNFISTSTSSSSSSSSASSLPSSMSSSLPSSLSSSLSSSLSSSMSSSMSSLFIIPPPYTTTRSSGSSIIDTEIVSFYSTTDSPGHTITGTTTTTLYGPHTHSSVSTPSSSSESSTTSNSSIESSSLPHTSVSSTPESSITPSSNTISSSPTSDFSSVQSSSIMESSSVVASSSVINSSSIVDSSSSSASSLPSSMSSSLSSSMSSSLPSSMSSSLSSSLSSSLSSSMSSSMSSLFIIPPPYTTTRSSGSSIIDTEIVSFYSTTDSPGHTITGTTTTTLYGPHTHSSVSTPSSSSESSTTSNSSIESSSLPHTSVSSTPESSITPSSNTISSSPTSDFSSVQSSSIMESSSVVASSSVINSSSIVDSSSSSASSLPSSMPSSLPSSMSSSLSSSMSSSLSSSLSSSLSSSMSSSMSSLFIIPPPYTTTRSSGSSIIDTEIVSFYSTTDSPGHTITGTTTTTLYGPHTHSSVSTPSSSSESSTTSNSSIESSSLPHTSVSSTPESSITPSSNTISSSPTSDFSSVQSSSIMESSSVVASSSATQSSSVINSSSIVDSSSSSASSLPSSMPSSLPSSLSSSLSSSLSSSMSSSMSSLFIIPPPYTTTRSSGSSIIDTEIVSFYSTTDSPGHTITGTTTTTLYESSIYSSSSSTIQESELSNTSRTTMTSNSSVSISSTSSRSSFSNTKSSTIVISQSASLPDSKTDIILSTSSNIGYSSRSLLSDLGTSISDSDIHHSVLHSTESYSSNESGTNPFTSIASLSNFIPESSSHTSTALGSENSVISSDILTTMSHPVATNSGDKPTTPKRSEQVSTTMTSSGPTPDTSSFDTDGMSAYSRPEFTTNSLEVNKSSTSQLGNNKQTFSNLQLESTRPHSENEVDNNTRLLQSIQQSSTYGTNNVNPLSPTGSISIPLTEDGQGDNNNWNSPATNDLCTQISFNLTATTITVTDRITITDSIHDISSEVITSYIYQTIVDQKTVTQTVDGKSLANKMSSIPKPSSRSLIQPQPPVAIELQEGAASTSRVSLVSLFISIILVLL.

The N-terminal stretch at 1-19 (MISFVTLLAILGLLSISWA) is a signal peptide. 3 cysteine pairs are disulfide-bonded: cysteine 115–cysteine 145, cysteine 144–cysteine 178, and cysteine 304–cysteine 341. Asparagine 117 carries N-linked (GlcNAc...) asparagine glycosylation. N-linked (GlcNAc...) asparagine glycans are attached at residues asparagine 315, asparagine 345, asparagine 468, and asparagine 526. The interval 429-507 (TTDSPGHTIT…SSPTSDFSSV (79 aa)) is disordered. Disordered regions lie at residues 530-553 (IVDS…SSSM) and 612-690 (TTDS…FSSV). 2 N-linked (GlcNAc...) asparagine glycosylation sites follow: asparagine 651 and asparagine 709. 2 disordered regions span residues 714–739 (VDSS…MSSS) and 795–873 (TTDS…FSSV). 5 N-linked (GlcNAc...) asparagine glycosylation sites follow: asparagine 834, asparagine 898, asparagine 1008, asparagine 1017, and asparagine 1096. Residues 1000–1032 (TIQESELSNTSRTTMTSNSSVSISSTSSRSSFS) are disordered. Composition is skewed to polar residues over residues 1140–1150 (SHPVATNSGDK) and 1159–1177 (QVST…SSFD). Positions 1140–1186 (SHPVATNSGDKPTTPKRSEQVSTTMTSSGPTPDTSSFDTDGMSAYSR) are disordered. N-linked (GlcNAc...) asparagine glycosylation is present at asparagine 1197. The segment covering 1198 to 1218 (KSSTSQLGNNKQTFSNLQLES) has biased composition (polar residues). A disordered region spans residues 1198 to 1227 (KSSTSQLGNNKQTFSNLQLESTRPHSENEV). N-linked (GlcNAc...) asparagine glycosylation occurs at asparagine 1229. A compositionally biased stretch (polar residues) spans 1241-1259 (STYGTNNVNPLSPTGSISI). Residues 1241–1269 (STYGTNNVNPLSPTGSISIPLTEDGQGDN) are disordered. Asparagine 1287 is a glycosylation site (N-linked (GlcNAc...) asparagine).

Its subcellular location is the secreted. The protein resides in the cell wall. In terms of biological role, may play a role in cell adhesion. In Candida glabrata (strain ATCC 2001 / BCRC 20586 / JCM 3761 / NBRC 0622 / NRRL Y-65 / CBS 138) (Yeast), this protein is Adhesin AWP3b.